A 520-amino-acid chain; its full sequence is Cobyric acid synthase (520 aa).

The region spanning tryptophan 257–phenylalanine 451 is the GATase cobBQ-type domain. Cysteine 338 acts as the Nucleophile in catalysis. The active site involves histidine 443.

Belongs to the CobB/CobQ family. CobQ subfamily.

It functions in the pathway cofactor biosynthesis; adenosylcobalamin biosynthesis. Its function is as follows. Catalyzes amidations at positions B, D, E, and G on adenosylcobyrinic A,C-diamide. NH(2) groups are provided by glutamine, and one molecule of ATP is hydrogenolyzed for each amidation. This chain is Cobyric acid synthase, found in Nocardia farcinica (strain IFM 10152).